A 151-amino-acid polypeptide reads, in one-letter code: Transcriptional regulator MraZ (151 aa).

SpoVT-AbrB domains follow at residues 5–52 (ANAV…PLDE) and 81–124 (AVDL…DEDA).

Belongs to the MraZ family. Forms oligomers.

It localises to the cytoplasm. It is found in the nucleoid. This is Transcriptional regulator MraZ from Pseudomonas putida (strain ATCC 700007 / DSM 6899 / JCM 31910 / BCRC 17059 / LMG 24140 / F1).